The sequence spans 157 residues: S-ribosylhomocysteine lyase (157 aa).

Fe cation is bound by residues histidine 53, histidine 57, and cysteine 124.

The protein belongs to the LuxS family. As to quaternary structure, homodimer. It depends on Fe cation as a cofactor.

The enzyme catalyses S-(5-deoxy-D-ribos-5-yl)-L-homocysteine = (S)-4,5-dihydroxypentane-2,3-dione + L-homocysteine. Its function is as follows. Involved in the synthesis of autoinducer 2 (AI-2) which is secreted by bacteria and is used to communicate both the cell density and the metabolic potential of the environment. The regulation of gene expression in response to changes in cell density is called quorum sensing. Catalyzes the transformation of S-ribosylhomocysteine (RHC) to homocysteine (HC) and 4,5-dihydroxy-2,3-pentadione (DPD). The chain is S-ribosylhomocysteine lyase from Borrelia garinii subsp. bavariensis (strain ATCC BAA-2496 / DSM 23469 / PBi) (Borreliella bavariensis).